The sequence spans 756 residues: Neutral ceramidase (756 aa).

The Cytoplasmic segment spans residues 1-11; it reads MAKRTFSTLEA. The chain crosses the membrane as a helical; Signal-anchor for type II membrane protein span at residues 12–32; it reads FLIFLLVIMTVITVALLTLLF. Topologically, residues 33–756 are lumenal; that stretch reads VTSGTIENHK…ISSPFEVVTT (724 aa). Residues T56, T57, T58, and T64 are each glycosylated (O-linked (GalNAc...) threonine). L110 is a Ca(2+) binding site. H170 lines the Zn(2+) pocket. A glycan (N-linked (GlcNAc...) asparagine) is linked at N193. Residue H279 coordinates Zn(2+). The Nucleophile role is filled by S330. 2 disulfide bridges follow: C338-C352 and C345-C360. 2 N-linked (GlcNAc...) asparagine glycosylation sites follow: N407 and N444. C424 and C474 are disulfide-bonded. Residues E516 and Y555 each coordinate Zn(2+). Ca(2+) contacts are provided by D688, S690, and T693. Residues 746–756 are required for correct folding and localization; that stretch reads GISSPFEVVTT.

The protein belongs to the neutral ceramidase family. In terms of assembly, may interact with CAV1. Requires Zn(2+) as cofactor. Proteolytic cleavage of the N-terminus removes the signal-anchor and produces a soluble form of the protein. In terms of processing, N-glycosylated. Required for enzyme activity. Post-translationally, O-glycosylated. Required to retain it as a type II membrane protein at the cell surface. Phosphorylated. May prevent ubiquitination and subsequent degradation. In terms of processing, ubiquitinated, leading to its degradation by the proteasome. Ubiquitination is triggered by nitric oxide. As to expression, widely expressed. Strongly expressed in small intestine and to a lower extent in liver and kidney. Highly expressed in duodenum, jejunum and ileum along the brush border of the small intestine (at protein level).

The protein resides in the cell membrane. Its subcellular location is the membrane raft. It localises to the membrane. The protein localises to the caveola. It is found in the golgi apparatus membrane. The protein resides in the mitochondrion. Its subcellular location is the secreted. It localises to the extracellular exosome. The enzyme catalyses an N-acylsphing-4-enine + H2O = sphing-4-enine + a fatty acid. It catalyses the reaction N-hexadecanoylsphing-4-enine + H2O = sphing-4-enine + hexadecanoate. The catalysed reaction is N-dodecanoylsphing-4-enine + H2O = dodecanoate + sphing-4-enine. It carries out the reaction N-octadecanoylsphing-4-enine + H2O = sphing-4-enine + octadecanoate. The enzyme catalyses N-octanoylsphing-4-enine + H2O = octanoate + sphing-4-enine. It catalyses the reaction N-(hexanoyl)sphing-4-enine + H2O = hexanoate + sphing-4-enine. The catalysed reaction is N-tetradecanoylsphing-4-enine + H2O = tetradecanoate + sphing-4-enine. It carries out the reaction N-(9Z-octadecenoyl)-sphing-4-enine + H2O = sphing-4-enine + (9Z)-octadecenoate. The enzyme catalyses N-(15Z-tetracosenoyl)-sphing-4-enine + H2O = (15Z)-tetracosenoate + sphing-4-enine. It catalyses the reaction sphinganine + hexadecanoate = N-hexadecanoylsphinganine + H2O. The catalysed reaction is N-(octadecanoyl)-sphinganine + H2O = sphinganine + octadecanoate. The protein operates within lipid metabolism; sphingolipid metabolism. Inhibited by D-erythro-MAPP. Its function is as follows. Plasma membrane ceramidase that hydrolyzes sphingolipid ceramides into sphingosine and free fatty acids at neutral pH. Ceramides, sphingosine, and its phosphorylated form sphingosine-1-phosphate are bioactive lipids that mediate cellular signaling pathways regulating several biological processes including cell proliferation, apoptosis and differentiation. Also catalyzes the reverse reaction allowing the synthesis of ceramides from fatty acids and sphingosine. Together with sphingomyelinase, participates in the production of sphingosine and sphingosine-1-phosphate from the degradation of sphingomyelin, a sphingolipid enriched in the plasma membrane of cells. Also participates in the hydrolysis of ceramides from the extracellular milieu allowing the production of sphingosine-1-phosphate inside and outside cells. This is the case for instance with the digestion of dietary sphingolipids in the intestinal tract. The sequence is that of Neutral ceramidase (Asah2) from Mus musculus (Mouse).